Here is an 87-residue protein sequence, read N- to C-terminus: Small ribosomal subunit protein bS20 (87 aa).

The tract at residues 1–27 is disordered; it reads MANSVQATKRARQAEKHRQHNAGMRAA. A compositionally biased stretch (basic residues) spans 9–20; it reads KRARQAEKHRQH.

The protein belongs to the bacterial ribosomal protein bS20 family.

Binds directly to 16S ribosomal RNA. This chain is Small ribosomal subunit protein bS20, found in Hydrogenovibrio crunogenus (strain DSM 25203 / XCL-2) (Thiomicrospira crunogena).